We begin with the raw amino-acid sequence, 269 residues long: Formamidopyrimidine-DNA glycosylase (269 aa).

Pro-2 functions as the Schiff-base intermediate with DNA in the catalytic mechanism. Glu-3 serves as the catalytic Proton donor. Residue Lys-57 is the Proton donor; for beta-elimination activity of the active site. 3 residues coordinate DNA: His-90, Arg-109, and Lys-150. Residues 235–269 form an FPG-type zinc finger; that stretch reads QVYGKAGEPCPECGEAIQEQKIGQRNTFYCSYCQC. Arg-259 serves as the catalytic Proton donor; for delta-elimination activity.

This sequence belongs to the FPG family. As to quaternary structure, monomer. The cofactor is Zn(2+).

It catalyses the reaction Hydrolysis of DNA containing ring-opened 7-methylguanine residues, releasing 2,6-diamino-4-hydroxy-5-(N-methyl)formamidopyrimidine.. The enzyme catalyses 2'-deoxyribonucleotide-(2'-deoxyribose 5'-phosphate)-2'-deoxyribonucleotide-DNA = a 3'-end 2'-deoxyribonucleotide-(2,3-dehydro-2,3-deoxyribose 5'-phosphate)-DNA + a 5'-end 5'-phospho-2'-deoxyribonucleoside-DNA + H(+). In terms of biological role, involved in base excision repair of DNA damaged by oxidation or by mutagenic agents. Acts as a DNA glycosylase that recognizes and removes damaged bases. Has a preference for oxidized purines, such as 7,8-dihydro-8-oxoguanine (8-oxoG). Has AP (apurinic/apyrimidinic) lyase activity and introduces nicks in the DNA strand. Cleaves the DNA backbone by beta-delta elimination to generate a single-strand break at the site of the removed base with both 3'- and 5'-phosphates. This chain is Formamidopyrimidine-DNA glycosylase, found in Vibrio vulnificus (strain CMCP6).